The chain runs to 94 residues: Large ribosomal subunit protein bL25 (94 aa).

The protein belongs to the bacterial ribosomal protein bL25 family. As to quaternary structure, part of the 50S ribosomal subunit; part of the 5S rRNA/L5/L18/L25 subcomplex. Contacts the 5S rRNA. Binds to the 5S rRNA independently of L5 and L18.

This is one of the proteins that binds to the 5S RNA in the ribosome where it forms part of the central protuberance. The protein is Large ribosomal subunit protein bL25 of Cronobacter sakazakii (strain ATCC BAA-894) (Enterobacter sakazakii).